A 102-amino-acid polypeptide reads, in one-letter code: Nucleoid-associated protein WIGBR5260 (102 aa).

The protein belongs to the YbaB/EbfC family. Homodimer.

It localises to the cytoplasm. The protein resides in the nucleoid. Functionally, binds to DNA and alters its conformation. May be involved in regulation of gene expression, nucleoid organization and DNA protection. This Wigglesworthia glossinidia brevipalpis protein is Nucleoid-associated protein WIGBR5260.